Here is a 734-residue protein sequence, read N- to C-terminus: Sulfate transporter (734 aa).

Basic and acidic residues predominate over residues 1–18 (MSLKNEDQNDLSPKDSVK). Residues 1–38 (MSLKNEDQNDLSPKDSVKGNDQYRAPSGIHLEPEEESR) are disordered. Residues Ser12 and Ser16 each carry the phosphoserine modification. 2 consecutive transmembrane segments (helical) span residues 113–133 (VMSG…YSLL) and 138–158 (PIYG…LGTS). N-linked (GlcNAc...) asparagine glycosylation is present at Asn194. A run of 6 helical transmembrane segments spans residues 214–234 (IIVG…MGFF), 237–257 (GFVS…GASF), 379–399 (VDAI…SEMF), 415–435 (AIGF…SAAL), 453–473 (VMTA…FFSL), and 519–539 (LIST…CVIL). Residues 563–714 (AYKNLQAKSG…YSIYEAMTFA (152 aa)) form the STAS domain.

This sequence belongs to the SLC26A/SulP transporter (TC 2.A.53) family. Post-translationally, N-glycosylated.

Its subcellular location is the cell membrane. It is found in the apical cell membrane. It carries out the reaction oxalate(in) + sulfate(out) = oxalate(out) + sulfate(in). The enzyme catalyses sulfate(out) + 2 chloride(in) = sulfate(in) + 2 chloride(out). It catalyses the reaction oxalate(out) + 2 chloride(in) = oxalate(in) + 2 chloride(out). The catalysed reaction is bromide(in) + chloride(out) = bromide(out) + chloride(in). It carries out the reaction nitrate(in) + chloride(out) = nitrate(out) + chloride(in). The enzyme catalyses iodide(in) + chloride(out) = iodide(out) + chloride(in). Sulfate transporter which mediates sulfate uptake into chondrocytes in order to maintain adequate sulfation of proteoglycans which is needed for cartilage development. Mediates electroneutral anion exchange of sulfate ions for oxalate ions, sulfate and oxalate ions for chloride and/or hydroxyl ions and chloride ions for bromide, iodide and nitrate ions. The coupling of sulfate transport to both hydroxyl and chloride ions likely serves to ensure transport at both acidic pH when most sulfate uptake is mediated by sulfate-hydroxide exchange and alkaline pH when most sulfate uptake is mediated by sulfate-chloride exchange. Essential for chondrocyte proliferation, differentiation and cell size expansion. The chain is Sulfate transporter (SLC26A2) from Bos taurus (Bovine).